Here is a 195-residue protein sequence, read N- to C-terminus: Toxin protein Tse4 (195 aa).

Transmembrane regions (helical) follow at residues 20 to 40 (ASGG…ITLL), 116 to 136 (YVEL…LFGL), 140 to 160 (LLAA…GASM), and 171 to 191 (ALLM…AAYL).

Its subcellular location is the host membrane. The protein resides in the secreted. Toxin secreted by the H1 type VI (H1-T6SS) secretion system into the periplasm of recipient cells. The protein is Toxin protein Tse4 of Pseudomonas aeruginosa (strain ATCC 15692 / DSM 22644 / CIP 104116 / JCM 14847 / LMG 12228 / 1C / PRS 101 / PAO1).